The chain runs to 332 residues: Beta-ketoacyl-[acyl-carrier-protein] synthase III (332 aa).

Catalysis depends on residues cysteine 112 and histidine 252. Residues 253–257 (QANLR) are ACP-binding. Asparagine 282 is an active-site residue.

This sequence belongs to the thiolase-like superfamily. FabH family. In terms of assembly, homodimer.

The protein resides in the cytoplasm. The catalysed reaction is malonyl-[ACP] + acetyl-CoA + H(+) = 3-oxobutanoyl-[ACP] + CO2 + CoA. Its pathway is lipid metabolism; fatty acid biosynthesis. In terms of biological role, catalyzes the condensation reaction of fatty acid synthesis by the addition to an acyl acceptor of two carbons from malonyl-ACP. Catalyzes the first condensation reaction which initiates fatty acid synthesis and may therefore play a role in governing the total rate of fatty acid production. Possesses both acetoacetyl-ACP synthase and acetyl transacylase activities. Its substrate specificity determines the biosynthesis of branched-chain and/or straight-chain of fatty acids. This chain is Beta-ketoacyl-[acyl-carrier-protein] synthase III, found in Syntrophomonas wolfei subsp. wolfei (strain DSM 2245B / Goettingen).